A 422-amino-acid polypeptide reads, in one-letter code: Tyrosine--tRNA ligase 1 (422 aa).

Tyr-35 contributes to the L-tyrosine binding site. Residues 40 to 49 (PTADSLHIGH) carry the 'HIGH' region motif. L-tyrosine-binding residues include Tyr-170 and Gln-174. Positions 232–236 (KFGKT) match the 'KMSKS' region motif. Lys-235 provides a ligand contact to ATP. The 67-residue stretch at 355-421 (LSLVDVLVQS…GKKKYFLVTY (67 aa)) folds into the S4 RNA-binding domain.

This sequence belongs to the class-I aminoacyl-tRNA synthetase family. TyrS type 1 subfamily. Homodimer.

It localises to the cytoplasm. The enzyme catalyses tRNA(Tyr) + L-tyrosine + ATP = L-tyrosyl-tRNA(Tyr) + AMP + diphosphate + H(+). Catalyzes the attachment of tyrosine to tRNA(Tyr) in a two-step reaction: tyrosine is first activated by ATP to form Tyr-AMP and then transferred to the acceptor end of tRNA(Tyr). This is Tyrosine--tRNA ligase 1 from Bacillus subtilis (strain 168).